Reading from the N-terminus, the 254-residue chain is Insulin-like growth factor-binding protein 4 (254 aa).

The first 21 residues, Met-1–Gly-21, serve as a signal peptide directing secretion. Positions Glu-23–Leu-103 constitute an IGFBP N-terminal domain. Intrachain disulfides connect Cys-27–Cys-53, Cys-30–Cys-55, Cys-38–Cys-56, Cys-44–Cys-59, Cys-67–Cys-80, and Cys-74–Cys-100. Asn-125 carries N-linked (GlcNAc...) asparagine glycosylation. Intrachain disulfides connect Cys-131–Cys-138, Cys-170–Cys-200, Cys-211–Cys-222, and Cys-224–Cys-245. The Thyroglobulin type-1 domain maps to Gln-167 to Cys-245. A Phosphoserine modification is found at Ser-251.

As to quaternary structure, binds IGF2 more than IGF1.

The protein resides in the secreted. IGF-binding proteins prolong the half-life of the IGFs and have been shown to either inhibit or stimulate the growth promoting effects of the IGFs on cell culture. They alter the interaction of IGFs with their cell surface receptors. This Mus musculus (Mouse) protein is Insulin-like growth factor-binding protein 4 (Igfbp4).